The primary structure comprises 334 residues: L-lactate dehydrogenase C chain (334 aa).

NAD(+) is bound by residues 30–58 and arginine 100; that span reads GQVG…VEDK. The substrate site is built by arginine 107, asparagine 139, and arginine 170. NAD(+) is bound at residue asparagine 139. Catalysis depends on histidine 194, which acts as the Proton acceptor. Residue threonine 249 participates in substrate binding.

The protein belongs to the LDH/MDH superfamily. LDH family. In terms of assembly, homotetramer. As to expression, eye and liver.

The protein resides in the cytoplasm. The catalysed reaction is (S)-lactate + NAD(+) = pyruvate + NADH + H(+). Its pathway is fermentation; pyruvate fermentation to lactate; (S)-lactate from pyruvate: step 1/1. This is L-lactate dehydrogenase C chain (ldhc) from Fundulus heteroclitus (Killifish).